Here is a 185-residue protein sequence, read N- to C-terminus: MIDEVLLDAEEKMEKAVTVARDDFATIRTGRANPGMFQRVVIDYYGTPTPITQVAGINVPEARMVVIKPYESNQLKAIEDAIRNSDLGLNPSNDGSIIRVAIPQLTEERRRELVKQAKGKGEDAKVTLRNIRRKANDELNRIKKDGEAGEDEVGRAEKDLDKTTAQYVSQIDELVKHKEGELLEV.

It belongs to the RRF family.

It is found in the cytoplasm. Its function is as follows. Responsible for the release of ribosomes from messenger RNA at the termination of protein biosynthesis. May increase the efficiency of translation by recycling ribosomes from one round of translation to another. This is Ribosome-recycling factor from Mycobacteroides abscessus (strain ATCC 19977 / DSM 44196 / CCUG 20993 / CIP 104536 / JCM 13569 / NCTC 13031 / TMC 1543 / L948) (Mycobacterium abscessus).